The sequence spans 123 residues: MAVSGSHRPLTGPQAESWTAEYLTARGLRLIERNYRCRLGEIDLVMAEGATLVFVEVRYRSGKRYGGALASVDRHKCRRLLATAQHYMVEHRVTGAVRLDVVAVSPGAAGPQAEWIRNAIEAQ.

This sequence belongs to the UPF0102 family.

The chain is UPF0102 protein MCA0184 from Methylococcus capsulatus (strain ATCC 33009 / NCIMB 11132 / Bath).